The sequence spans 549 residues: Dicarboxylate transporter 2.2, chloroplastic (549 aa).

The N-terminal 54 residues, 1–54, are a transit peptide targeting the chloroplast; it reads MESLALRSISLSASYLSLHRSSSKSFALLPPSISVHTSPTLRSLSISSPRFTLR. The segment at 57–79 is disordered; that stretch reads ASSLPEEQNKPQPPPPSPPQPQG. Pro residues predominate over residues 67-77; it reads PQPPPPSPPQP. 12 helical membrane passes run 79–99, 115–135, 151–171, 220–240, 247–267, 294–314, 344–364, 365–385, 403–423, 436–456, 470–490, and 523–543; these read GAKL…RFLI, IFLF…AWAF, TAFA…FFFA, AGGV…SYPG, LGSF…AILL, WFKV…LIIY, NEWI…FGEA, IGIA…LLGV, WFAV…VAWM, LTWP…HYLF, FLAM…CLAF, and VGFV…SFWW.

Belongs to the SLC13A/DASS transporter (TC 2.A.47) family. DIT1 subfamily. As to expression, expressed in roots, rosette and cauline leaves, stems, flowers and siliques.

Its subcellular location is the plastid. The protein localises to the chloroplast inner membrane. In terms of biological role, may be involved in the transport of dicarboxylate compounds. This Arabidopsis thaliana (Mouse-ear cress) protein is Dicarboxylate transporter 2.2, chloroplastic (DIT2-2).